Here is a 1120-residue protein sequence, read N- to C-terminus: Elongation factor-like GTPase 1 (1120 aa).

The tr-type G domain occupies 17–272 (ANIRNICVLA…LMKTLWGDYY (256 aa)). GTP is bound by residues 26–33 (AHVDHGKT), 92–96 (DSPGH), and 146–149 (NKID). The tract at residues 430–496 (PRPLTQEEIA…VESMTPKPVL (67 aa)) is disordered. Composition is skewed to basic and acidic residues over residues 438–452 (IAQR…HAEK) and 475–484 (PKGEEPRGDE). Residue Lys-528 is modified to N6-acetyllysine. Residues 907–930 (ASDLAKEGQEENETCSGGNENQEL) are disordered. Polar residues predominate over residues 920–930 (TCSGGNENQEL).

Belongs to the TRAFAC class translation factor GTPase superfamily. Classic translation factor GTPase family. As to quaternary structure, associates with the 60S ribosomal subunit. Found in a complex consisting of the 60S ribosomal subunit, SBDS and EFL1. Interacts with SBDS and binds to GTP and GDP; the interaction with SBDS decreases EFL1 affinity for GDP and facilitates GDP release. Expressed at low levels in brain. Expression is highly increased in glioma tissues.

It catalyses the reaction GTP + H2O = GDP + phosphate + H(+). Its activity is regulated as follows. GTPase activity is stimulated in the presence of 60S ribosome subunits. Its function is as follows. GTPase involved in the biogenesis of the 60S ribosomal subunit and translational activation of ribosomes. Together with SBDS, triggers the GTP-dependent release of EIF6 from 60S pre-ribosomes in the cytoplasm, thereby activating ribosomes for translation competence by allowing 80S ribosome assembly and facilitating EIF6 recycling to the nucleus, where it is required for 60S rRNA processing and nuclear export. This is Elongation factor-like GTPase 1 from Homo sapiens (Human).